Reading from the N-terminus, the 1054-residue chain is FERM, ARHGEF and pleckstrin domain-containing protein 2 (1054 aa).

Residues 44–324 (LHLRVKLLDN…EYHTFFRLLD (281 aa)) form the FERM domain. A phosphoserine mark is found at S389 and S439. The segment at 421–527 (EFKDSSSSLT…GAGMDCEEPR (107 aa)) is disordered. A compositionally biased stretch (low complexity) spans 468–492 (PGPGLSTKSPQPSPSSRKSPLSLSP). The DH domain maps to 535-726 (EAYFIVKEIL…TEVTTTLQHI (192 aa)). The PH 1 domain maps to 755-852 (EFIREGCLHK…WMLDLNSAIQ (98 aa)). Residues 856–894 (SGGDTAPALPGRTVCTRPPRSPNEVSLEQESEDDARGVR) are disordered. In terms of domain architecture, PH 2 spans 929–1026 (ENQLSGYLLR…WMEVIQGASS (98 aa)). Residues 1029–1054 (GRAPSIVQDGPQPSSGLEGMVRGKEE) form a disordered region.

In terms of assembly, interacts with PLXNA1. Interaction with PLXNA1 or PIP5K1C lowers its guanine nucleotide exchange activity. Dissociates from PLXNA1 when SEMA3A binds to the receptor. Interacts with PIP5K1C via its FERM domain. The interaction with PIP5K1C is enhanced by SEMA3A binding. Interacts with RAC1.

Functions as a guanine nucleotide exchange factor that activates RAC1. May have relatively low activity. Plays a role in the response to class 3 semaphorins and remodeling of the actin cytoskeleton. Plays a role in TNFSF11-mediated osteoclast differentiation, especially in podosome rearrangement and reorganization of the actin cytoskeleton. Regulates the activation of ITGB3, integrin signaling and cell adhesion. The sequence is that of FERM, ARHGEF and pleckstrin domain-containing protein 2 (FARP2) from Homo sapiens (Human).